The following is a 444-amino-acid chain: Methionine aminopeptidase 2-1 (444 aa).

The interval 1–92 (MAAQVTEKLQ…VPVSNLFPNN (92 aa)) is disordered. Residues 15 to 29 (NGQNGDAKANSTAVG) show a composition bias toward polar residues. Residues 34-45 (GEAEDDSDDEKE) show a composition bias toward acidic residues. The segment covering 59–73 (AKKKKRKSKKKKKGG) has biased composition (basic residues). Residue histidine 197 coordinates substrate. Residues aspartate 217, aspartate 228, and histidine 297 each contribute to the a divalent metal cation site. Histidine 305 lines the substrate pocket. Residues glutamate 330 and glutamate 425 each contribute to the a divalent metal cation site.

Belongs to the peptidase M24A family. Methionine aminopeptidase eukaryotic type 2 subfamily. Co(2+) is required as a cofactor. Zn(2+) serves as cofactor. It depends on Mn(2+) as a cofactor. The cofactor is Fe(2+).

It is found in the cytoplasm. The enzyme catalyses Release of N-terminal amino acids, preferentially methionine, from peptides and arylamides.. Cotranslationally removes the N-terminal methionine from nascent proteins. The N-terminal methionine is often cleaved when the second residue in the primary sequence is small and uncharged (Met-Ala-, Cys, Gly, Pro, Ser, Thr, or Val). The polypeptide is Methionine aminopeptidase 2-1 (Neosartorya fischeri (strain ATCC 1020 / DSM 3700 / CBS 544.65 / FGSC A1164 / JCM 1740 / NRRL 181 / WB 181) (Aspergillus fischerianus)).